Reading from the N-terminus, the 599-residue chain is Putative ATP-dependent helicase YeeB (599 aa).

The Helicase ATP-binding domain maps to 30-207; the sequence is AFEKRNSQYL…LLPEDEELFD (178 aa). 43–50 contributes to the ATP binding site; sequence APPASGKS. The DEAH box motif lies at 154 to 157; that stretch reads DEFH. One can recognise a Helicase C-terminal domain in the interval 236–408; that stretch reads QYTSAINEVL…TVNTMLKAIS (173 aa).

This sequence belongs to the helicase family.

The chain is Putative ATP-dependent helicase YeeB (yeeB) from Bacillus subtilis (strain 168).